A 536-amino-acid polypeptide reads, in one-letter code: Phosphoenolpyruvate carboxykinase (ATP) (536 aa).

Substrate contacts are provided by arginine 61, tyrosine 195, and lysine 201. Residues lysine 201, histidine 220, and 236 to 244 (GLSGTGKTT) each bind ATP. Residues lysine 201 and histidine 220 each contribute to the Mn(2+) site. Mn(2+) is bound at residue aspartate 257. Residues glutamate 285, arginine 322, and threonine 447 each coordinate ATP. Substrate is bound at residue arginine 322.

The protein belongs to the phosphoenolpyruvate carboxykinase (ATP) family. Mn(2+) serves as cofactor.

It localises to the cytoplasm. The enzyme catalyses oxaloacetate + ATP = phosphoenolpyruvate + ADP + CO2. It participates in carbohydrate biosynthesis; gluconeogenesis. Involved in the gluconeogenesis. Catalyzes the conversion of oxaloacetate (OAA) to phosphoenolpyruvate (PEP) through direct phosphoryl transfer between the nucleoside triphosphate and OAA. The protein is Phosphoenolpyruvate carboxykinase (ATP) of Allorhizobium ampelinum (strain ATCC BAA-846 / DSM 112012 / S4) (Agrobacterium vitis (strain S4)).